The following is a 296-amino-acid chain: Nucleotide-binding protein Pnuc_1915 (296 aa).

ATP is bound at residue 8–15 (GISGSGKS). 57–60 (DARR) is a binding site for GTP.

It belongs to the RapZ-like family.

In terms of biological role, displays ATPase and GTPase activities. This chain is Nucleotide-binding protein Pnuc_1915, found in Polynucleobacter asymbioticus (strain DSM 18221 / CIP 109841 / QLW-P1DMWA-1) (Polynucleobacter necessarius subsp. asymbioticus).